The primary structure comprises 349 residues: N-acetyl-gamma-glutamyl-phosphate reductase (349 aa).

The active site involves cysteine 149.

It belongs to the NAGSA dehydrogenase family. Type 1 subfamily.

It is found in the cytoplasm. It carries out the reaction N-acetyl-L-glutamate 5-semialdehyde + phosphate + NADP(+) = N-acetyl-L-glutamyl 5-phosphate + NADPH + H(+). Its pathway is amino-acid biosynthesis; L-arginine biosynthesis; N(2)-acetyl-L-ornithine from L-glutamate: step 3/4. Functionally, catalyzes the NADPH-dependent reduction of N-acetyl-5-glutamyl phosphate to yield N-acetyl-L-glutamate 5-semialdehyde. This is N-acetyl-gamma-glutamyl-phosphate reductase from Acinetobacter baumannii (strain AB307-0294).